A 215-amino-acid polypeptide reads, in one-letter code: Riboflavin synthase (215 aa).

Lumazine-binding repeat units follow at residues 1 to 96 (MFTG…FGGH) and 97 to 193 (FVSG…YRFL). Residues 4-6 (GIV), 47-49 (CLT), 61-66 (DVMPET), 100-102 (GHV), Lys-135, 144-146 (SST), and 158-163 (SVIPHT) each bind 2,4-dihydroxypteridine.

In terms of assembly, homotrimer.

It carries out the reaction 2 6,7-dimethyl-8-(1-D-ribityl)lumazine + H(+) = 5-amino-6-(D-ribitylamino)uracil + riboflavin. It functions in the pathway cofactor biosynthesis; riboflavin biosynthesis; riboflavin from 2-hydroxy-3-oxobutyl phosphate and 5-amino-6-(D-ribitylamino)uracil: step 2/2. Catalyzes the dismutation of two molecules of 6,7-dimethyl-8-ribityllumazine, resulting in the formation of riboflavin and 5-amino-6-(D-ribitylamino)uracil. The protein is Riboflavin synthase (ribE) of Bacillus amyloliquefaciens (Bacillus velezensis).